Consider the following 458-residue polypeptide: Argininosuccinate lyase (458 aa).

Belongs to the lyase 1 family. Argininosuccinate lyase subfamily.

The protein localises to the cytoplasm. The catalysed reaction is 2-(N(omega)-L-arginino)succinate = fumarate + L-arginine. It participates in amino-acid biosynthesis; L-arginine biosynthesis; L-arginine from L-ornithine and carbamoyl phosphate: step 3/3. The protein is Argininosuccinate lyase of Neisseria meningitidis serogroup C (strain 053442).